A 207-amino-acid chain; its full sequence is Vascular endothelial growth factor B (207 aa).

The first 21 residues, 1-21 (MSPLLRRLLLVALLQLARTQA), serve as a signal peptide directing secretion. Disulfide bonds link C47-C89, C78-C122, and C82-C124. Residues 129–139 (KESAVKPDRVA) show a composition bias toward basic and acidic residues. The tract at residues 129 to 178 (KESAVKPDRVAIPHHRPQPRSVPGWDSTPGASSPADIIHPTPAPGSSARL) is disordered.

Belongs to the PDGF/VEGF growth factor family. In terms of assembly, homodimer; disulfide-linked. Can also form heterodimer with VEGF. Post-translationally, VEGF-B186 is O-glycosylated. As to expression, abundantly expressed in heart, brain, kidney and skeletal muscle.

It localises to the secreted. Functionally, growth factor for endothelial cells. VEGF-B167 binds heparin and neuropilin-1 whereas the binding to neuropilin-1 of VEGF-B186 is regulated by proteolysis. VEGF-B seems to be required for normal heart function in adult but is not required for proper development of the cardiovascular system either during development or for angiogenesis in adults. This is Vascular endothelial growth factor B (Vegfb) from Mus musculus (Mouse).